Reading from the N-terminus, the 367-residue chain is Cytochrome b (367 aa).

4 consecutive transmembrane segments (helical) span residues 25 to 45 (FGSM…FLAI), 69 to 90 (WIMQ…YIHI), 105 to 125 (WLSG…GYVL), and 170 to 190 (FFAL…IHII). Positions 75 and 89 each coordinate heme b. 2 residues coordinate heme b: H174 and H188. Residue H193 participates in a ubiquinone binding. The next 4 membrane-spanning stretches (helical) occupy residues 218 to 238 (YKDV…MSFT), 280 to 300 (LGGT…PFTH), 312 to 332 (LTQA…WTAT), and 339 to 358 (FIFI…IINP).

The protein belongs to the cytochrome b family. The cytochrome bc1 complex contains 3 respiratory subunits (MT-CYB, CYC1 and UQCRFS1), 2 core proteins (UQCRC1 and UQCRC2) and probably 6 low-molecular weight proteins. Heme b serves as cofactor.

The protein resides in the mitochondrion inner membrane. In terms of biological role, component of the ubiquinol-cytochrome c reductase complex (complex III or cytochrome b-c1 complex) that is part of the mitochondrial respiratory chain. The b-c1 complex mediates electron transfer from ubiquinol to cytochrome c. Contributes to the generation of a proton gradient across the mitochondrial membrane that is then used for ATP synthesis. The protein is Cytochrome b (MT-CYB) of Austrelaps superbus (Lowland copperhead snake).